The primary structure comprises 614 residues: Pentatricopeptide repeat-containing protein At1g63080, mitochondrial (614 aa).

The N-terminal 7 residues, 1–7 (MSLAKRF), are a transit peptide targeting the mitochondrion. PPR repeat units lie at residues 64 to 98 (SIVE…GVSH), 99 to 133 (NLYT…GYGP), 134 to 168 (SIVT…GYQP), 169 to 203 (DTVT…GCQP), 204 to 238 (DLVT…KIEA), 239 to 273 (DVVI…GIRP), 274 to 308 (DVFT…KINP), 309 to 343 (NVVT…SIDP), 344 to 378 (NIVT…DCLP), 379 to 413 (DVVT…GLVG), 414 to 448 (NTVT…GVHP), 449 to 483 (NIMT…KMEP), 484 to 518 (DIYT…GVKP), 519 to 553 (DVIA…GPLP), and 554 to 588 (DSGT…RFAG).

The protein belongs to the PPR family. P subfamily.

It localises to the mitochondrion. This Arabidopsis thaliana (Mouse-ear cress) protein is Pentatricopeptide repeat-containing protein At1g63080, mitochondrial.